Consider the following 282-residue polypeptide: Pantothenate synthetase (282 aa).

30-37 (MGYYHAGH) is an ATP binding site. The active-site Proton donor is His-37. Gln-61 serves as a coordination point for (R)-pantoate. Gln-61 contributes to the beta-alanine binding site. 147-150 (GQKD) serves as a coordination point for ATP. Residue Gln-153 participates in (R)-pantoate binding. Residues Val-176 and 184-187 (LSSR) contribute to the ATP site.

This sequence belongs to the pantothenate synthetase family. In terms of assembly, homodimer.

It localises to the cytoplasm. It catalyses the reaction (R)-pantoate + beta-alanine + ATP = (R)-pantothenate + AMP + diphosphate + H(+). It participates in cofactor biosynthesis; (R)-pantothenate biosynthesis; (R)-pantothenate from (R)-pantoate and beta-alanine: step 1/1. Functionally, catalyzes the condensation of pantoate with beta-alanine in an ATP-dependent reaction via a pantoyl-adenylate intermediate. The sequence is that of Pantothenate synthetase from Desulfovibrio desulfuricans (strain ATCC 27774 / DSM 6949 / MB).